The chain runs to 538 residues: MGNCCGTPATAEEGGKRRRRGKQKKANPFTVAYNRAPSSAGAAAGRPGLMVLRDPTGRDLGARYELGGELGRGEFGITYLCTEAETGDRYACKSISKRKLRTPVDVEDVRREVEIMRHMPSHPNIVSLRAAYEDEDNVHLVMELCEGGELFDRIVARGHYTERAAAAVTRTIVEVVQMCHRHGVMHRDLKPENFLYANKKDSSPLKAIDFGLSVFFRPGERFTEIVGSPYYMAPEVLKRHYGPEVDVWSAGVILYILLCGVPPFWAETEQGVAQAIIRSVVDFKREPWPRVSEPAKDLVKRMLDPNPMTRLTAEQVLEHPWLHDSKKMPDIPLGDAVRARLQQFAAMNKLKKKALKVIAEHLSAEEAADIKDMFDKMDVSKNGQLTFEDFKAGIRKLGNQMPDSDLKILMDAADIDKNGILDYQEFVAVSIHVRKIGNDEHIQKAFSYFDQNKSGYIEIEELREALVDEIDGNDEDIINSIIRDVDTDKDGKISYDEFAVMMKAGTDWRKASRQYSRQRFSNLSLKLQKDGSISDDTQ.

The disordered stretch occupies residues 1-26; it reads MGNCCGTPATAEEGGKRRRRGKQKKA. G2 is lipidated: N-myristoyl glycine. Over residues 16 to 25 the composition is skewed to basic residues; that stretch reads KRRRRGKQKK. In terms of domain architecture, Protein kinase spans 64-322; the sequence is YELGGELGRG…AEQVLEHPWL (259 aa). ATP is bound by residues 70–78 and K93; that span reads LGRGEFGIT. The Proton acceptor role is filled by D188. The tract at residues 328–358 is autoinhibitory domain; it reads MPDIPLGDAVRARLQQFAAMNKLKKKALKVI. 4 consecutive EF-hand domains span residues 365-400, 401-436, 437-472, and 473-508; these read EEAA…LGNQ, MPDS…VRKI, GNDE…EIDG, and NDED…GTDW. Positions 378, 380, 382, 384, 389, 414, 416, 418, 425, 450, 452, 454, 456, 461, 486, 488, 490, 492, and 497 each coordinate Ca(2+).

It belongs to the protein kinase superfamily. Ser/Thr protein kinase family. CDPK subfamily.

It is found in the membrane. The catalysed reaction is L-seryl-[protein] + ATP = O-phospho-L-seryl-[protein] + ADP + H(+). It catalyses the reaction L-threonyl-[protein] + ATP = O-phospho-L-threonyl-[protein] + ADP + H(+). Its activity is regulated as follows. Activated by calcium. Autophosphorylation may play an important role in the regulation of the kinase activity. May play a role in signal transduction pathways that involve calcium as a second messenger. The polypeptide is Calcium-dependent protein kinase 8 (Oryza sativa subsp. japonica (Rice)).